A 752-amino-acid polypeptide reads, in one-letter code: MTILTVQSSFSSSRVPVIKNANFDQIPSWVSLKSSTSSPSVKISHKQGQVENLHLVSLSKHRKLNEAFEFLQEMDKAGVSVSSYSYQCLFEACRELRSLSHGRLLHDRMRMGIENPSVLLQNCVLQMYCECRSLEDADKLFDEMSELNAVSRTTMISAYAEQGILDKAVGLFSGMLASGDKPPSSMYTTLLKSLVNPRALDFGRQIHAHVIRAGLCSNTSIETGIVNMYVKCGWLVGAKRVFDQMAVKKPVACTGLMVGYTQAGRARDALKLFVDLVTEGVEWDSFVFSVVLKACASLEELNLGKQIHACVAKLGLESEVSVGTPLVDFYIKCSSFESACRAFQEIREPNDVSWSAIISGYCQMSQFEEAVKTFKSLRSKNASILNSFTYTSIFQACSVLADCNIGGQVHADAIKRSLIGSQYGESALITMYSKCGCLDDANEVFESMDNPDIVAWTAFISGHAYYGNASEALRLFEKMVSCGMKPNSVTFIAVLTACSHAGLVEQGKHCLDTMLRKYNVAPTIDHYDCMIDIYARSGLLDEALKFMKNMPFEPDAMSWKCFLSGCWTHKNLELGEIAGEELRQLDPEDTAGYVLPFNLYTWAGKWEEAAEMMKLMNERMLKKELSCSWIQEKGKIHRFIVGDKHHPQTQEIYEKLKEFDGFMEGDMFQCNMTERREQLLDHSERLAIAFGLISVHGNAPAPIKVFKNLRACPDCHEFAKHVSLVTGHEIVIRDSRRFHHFKEGKCSCNDYW.

The transit peptide at 1–80 directs the protein to the chloroplast; that stretch reads MTILTVQSSF…LQEMDKAGVS (80 aa). PPR repeat units lie at residues 47–81, 82–116, 117–147, 148–182, 183–217, 218–248, 249–283, 284–318, 319–349, 350–384, 386–420, 421–451, 452–486, 487–522, and 523–553; these read QGQV…GVSV, SSYS…IENP, SVLL…MSEL, NAVS…GDKP, PSSM…GLCS, NTSI…MAVK, KPVA…GVEW, DSFV…GLES, EVSV…IREP, NDVS…NASI, NSFT…SLIG, SQYG…MDNP, DIVA…GMKP, NSVT…NVAP, and TIDH…MPFE. Residues 558 to 633 are type E motif; sequence SWKCFLSGCW…ELSCSWIQEK (76 aa). The type E(+) motif stretch occupies residues 634-664; sequence GKIHRFIVGDKHHPQTQEIYEKLKEFDGFME. The type DYW motif stretch occupies residues 665–752; the sequence is GDMFQCNMTE…EGKCSCNDYW (88 aa).

This sequence belongs to the PPR family. PCMP-H subfamily.

It is found in the plastid. The protein resides in the chloroplast. This chain is Pentatricopeptide repeat-containing protein At5g13270, chloroplastic (PCMP-H90), found in Arabidopsis thaliana (Mouse-ear cress).